We begin with the raw amino-acid sequence, 255 residues long: tRNA pseudouridine synthase A (255 aa).

D53 acts as the Nucleophile in catalysis. Y113 contacts substrate.

The protein belongs to the tRNA pseudouridine synthase TruA family. Homodimer.

The catalysed reaction is uridine(38/39/40) in tRNA = pseudouridine(38/39/40) in tRNA. Its function is as follows. Formation of pseudouridine at positions 38, 39 and 40 in the anticodon stem and loop of transfer RNAs. The protein is tRNA pseudouridine synthase A of Acidiphilium cryptum (strain JF-5).